Consider the following 224-residue polypeptide: UPF0441 protein PC1_0312 (224 aa).

Residues 178-224 form a disordered region; the sequence is PKTALAPKPATTSTITRGGFGETVAKQNSMQRSSASSSSSSSRSMGG. Residues 209-224 are compositionally biased toward low complexity; that stretch reads RSSASSSSSSSRSMGG.

This sequence belongs to the UPF0441 family.

The protein is UPF0441 protein PC1_0312 of Pectobacterium carotovorum subsp. carotovorum (strain PC1).